Here is a 207-residue protein sequence, read N- to C-terminus: Octanoyltransferase (207 aa).

One can recognise a BPL/LPL catalytic domain in the interval 29-204 (AETRDELWVV…HLERHLSTSK (176 aa)). Substrate contacts are provided by residues 68 to 75 (RGGQITYH), 135 to 137 (SLG), and 148 to 150 (GLS). Cysteine 166 functions as the Acyl-thioester intermediate in the catalytic mechanism.

This sequence belongs to the LipB family.

It is found in the cytoplasm. It catalyses the reaction octanoyl-[ACP] + L-lysyl-[protein] = N(6)-octanoyl-L-lysyl-[protein] + holo-[ACP] + H(+). It functions in the pathway protein modification; protein lipoylation via endogenous pathway; protein N(6)-(lipoyl)lysine from octanoyl-[acyl-carrier-protein]: step 1/2. In terms of biological role, catalyzes the transfer of endogenously produced octanoic acid from octanoyl-acyl-carrier-protein onto the lipoyl domains of lipoate-dependent enzymes. Lipoyl-ACP can also act as a substrate although octanoyl-ACP is likely to be the physiological substrate. The chain is Octanoyltransferase from Chromobacterium violaceum (strain ATCC 12472 / DSM 30191 / JCM 1249 / CCUG 213 / NBRC 12614 / NCIMB 9131 / NCTC 9757 / MK).